Reading from the N-terminus, the 226-residue chain is UPF0758 protein SPD_0975 (226 aa).

The MPN domain occupies 103–225 (SILSSQKLAK…YFSYREKTDL (123 aa)). Positions 174, 176, and 187 each coordinate Zn(2+). Positions 174-187 (HNHPSGAVAPSQND) match the JAMM motif motif.

It belongs to the UPF0758 family.

The sequence is that of UPF0758 protein SPD_0975 from Streptococcus pneumoniae serotype 2 (strain D39 / NCTC 7466).